The sequence spans 332 residues: Very-long-chain 3-oxoacyl-CoA reductase (332 aa).

Residues 15–35 (GQWALAGIGALYVATRVGAFL) form a helical membrane-spanning segment. Residues V60, D115, D123, N142, K177, Y209, K213, V242, and T244 each coordinate NADP(+). Y209 serves as the catalytic Proton donor. The Lowers pKa of active site Tyr role is filled by K213.

Belongs to the short-chain dehydrogenases/reductases (SDR) family.

The protein resides in the endoplasmic reticulum membrane. It carries out the reaction a very-long-chain (3R)-3-hydroxyacyl-CoA + NADP(+) = a very-long-chain 3-oxoacyl-CoA + NADPH + H(+). It functions in the pathway lipid metabolism; fatty acid biosynthesis. Functionally, component of the microsomal membrane bound fatty acid elongation system, which produces the 26-carbon very long-chain fatty acids (VLCFA) from palmitate. Catalyzes the reduction of the 3-ketoacyl-CoA intermediate that is formed in each cycle of fatty acid elongation. VLCFAs serve as precursors for ceramide and sphingolipids. This chain is Very-long-chain 3-oxoacyl-CoA reductase, found in Neurospora crassa (strain ATCC 24698 / 74-OR23-1A / CBS 708.71 / DSM 1257 / FGSC 987).